The chain runs to 398 residues: Acetate kinase (398 aa).

Position 10 (asparagine 10) interacts with Mg(2+). Position 17 (lysine 17) interacts with ATP. Substrate is bound at residue arginine 89. The Proton donor/acceptor role is filled by aspartate 148. Residues histidine 208–glycine 212, aspartate 283–arginine 285, and glycine 331–asparagine 335 each bind ATP. Residue glutamate 385 coordinates Mg(2+).

Belongs to the acetokinase family. As to quaternary structure, homodimer. Mg(2+) is required as a cofactor. Mn(2+) serves as cofactor.

It is found in the cytoplasm. The catalysed reaction is acetate + ATP = acetyl phosphate + ADP. It participates in metabolic intermediate biosynthesis; acetyl-CoA biosynthesis; acetyl-CoA from acetate: step 1/2. Its function is as follows. Catalyzes the formation of acetyl phosphate from acetate and ATP. Can also catalyze the reverse reaction. This chain is Acetate kinase, found in Histophilus somni (strain 129Pt) (Haemophilus somnus).